A 194-amino-acid polypeptide reads, in one-letter code: Acid tolerance regulatory protein ActR (194 aa).

The region spanning 24–138 (SLLIVDDDTA…DILAALIQRP (115 aa)) is the Response regulatory domain. The residue at position 73 (Asp-73) is a 4-aspartylphosphate.

Post-translationally, phosphorylated by ActS.

Member of the two-component regulatory system ActS/ActR acting in acid tolerance. These data implicate that a two-component sensor may be involved in pH sensing and/or response. The sequence is that of Acid tolerance regulatory protein ActR (actR) from Rhizobium meliloti (strain 1021) (Ensifer meliloti).